We begin with the raw amino-acid sequence, 370 residues long: Isopentenyl-diphosphate delta-isomerase (370 aa).

Substrate is bound at residue 8–9 (RK). Residues threonine 65, 66–68 (GMT), serine 99, and asparagine 127 each bind FMN. 99-101 (SQR) contributes to the substrate binding site. Position 166 (glutamine 166) interacts with substrate. Glutamate 167 contributes to the Mg(2+) binding site. FMN is bound by residues lysine 198, serine 223, threonine 228, 277–279 (GMR), and 298–299 (AL).

Belongs to the IPP isomerase type 2 family. As to quaternary structure, homooctamer. Dimer of tetramers. FMN serves as cofactor. The cofactor is NADPH. Requires Mg(2+) as cofactor.

It is found in the cytoplasm. The enzyme catalyses isopentenyl diphosphate = dimethylallyl diphosphate. In terms of biological role, involved in the biosynthesis of isoprenoids. Catalyzes the 1,3-allylic rearrangement of the homoallylic substrate isopentenyl (IPP) to its allylic isomer, dimethylallyl diphosphate (DMAPP). This Pyrococcus abyssi (strain GE5 / Orsay) protein is Isopentenyl-diphosphate delta-isomerase.